A 467-amino-acid polypeptide reads, in one-letter code: ATP synthase subunit beta (467 aa).

156-163 provides a ligand contact to ATP; sequence GGAGVGKT.

This sequence belongs to the ATPase alpha/beta chains family. In terms of assembly, F-type ATPases have 2 components, CF(1) - the catalytic core - and CF(0) - the membrane proton channel. CF(1) has five subunits: alpha(3), beta(3), gamma(1), delta(1), epsilon(1). CF(0) has three main subunits: a(1), b(2) and c(9-12). The alpha and beta chains form an alternating ring which encloses part of the gamma chain. CF(1) is attached to CF(0) by a central stalk formed by the gamma and epsilon chains, while a peripheral stalk is formed by the delta and b chains.

It localises to the cell inner membrane. The enzyme catalyses ATP + H2O + 4 H(+)(in) = ADP + phosphate + 5 H(+)(out). In terms of biological role, produces ATP from ADP in the presence of a proton gradient across the membrane. The catalytic sites are hosted primarily by the beta subunits. This is ATP synthase subunit beta from Cupriavidus metallidurans (strain ATCC 43123 / DSM 2839 / NBRC 102507 / CH34) (Ralstonia metallidurans).